The primary structure comprises 62 residues: Photosystem II reaction center protein Z (62 aa).

2 consecutive transmembrane segments (helical) span residues 8-28 (LVLLLITLSTILVVGVPVVLA) and 41-61 (YTGAGLWTGLVIVTSLVNSLV).

The protein belongs to the PsbZ family. In terms of assembly, PSII is composed of 1 copy each of membrane proteins PsbA, PsbB, PsbC, PsbD, PsbE, PsbF, PsbH, PsbI, PsbJ, PsbK, PsbL, PsbM, PsbT, PsbX, PsbY, PsbZ, Psb30/Ycf12, at least 3 peripheral proteins of the oxygen-evolving complex and a large number of cofactors. It forms dimeric complexes.

The protein resides in the plastid. Its subcellular location is the chloroplast thylakoid membrane. May control the interaction of photosystem II (PSII) cores with the light-harvesting antenna, regulates electron flow through the 2 photosystem reaction centers. PSII is a light-driven water plastoquinone oxidoreductase, using light energy to abstract electrons from H(2)O, generating a proton gradient subsequently used for ATP formation. In Porphyra purpurea (Red seaweed), this protein is Photosystem II reaction center protein Z.